A 741-amino-acid polypeptide reads, in one-letter code: Methionine--tRNA ligase (741 aa).

Residues 11–21 (PYANGPIHAGH) carry the 'HIGH' region motif. Positions 143, 146, 156, and 159 each coordinate Zn(2+). Positions 345–349 (KFSTS) match the 'KMSKS' region motif. Thr348 is an ATP binding site. The region spanning 641–741 (EFAKLDLRVG…KEVKLGARIR (101 aa)) is the tRNA-binding domain.

Belongs to the class-I aminoacyl-tRNA synthetase family. MetG type 1 subfamily. Homodimer. Requires Zn(2+) as cofactor.

Its subcellular location is the cytoplasm. The enzyme catalyses tRNA(Met) + L-methionine + ATP = L-methionyl-tRNA(Met) + AMP + diphosphate. Its function is as follows. Is required not only for elongation of protein synthesis but also for the initiation of all mRNA translation through initiator tRNA(fMet) aminoacylation. In Thermococcus kodakarensis (strain ATCC BAA-918 / JCM 12380 / KOD1) (Pyrococcus kodakaraensis (strain KOD1)), this protein is Methionine--tRNA ligase.